We begin with the raw amino-acid sequence, 215 residues long: Pyrrolidone-carboxylate peptidase (215 aa).

Catalysis depends on residues Glu80, Cys143, and His167.

It belongs to the peptidase C15 family. As to quaternary structure, homotetramer.

Its subcellular location is the cytoplasm. The catalysed reaction is Release of an N-terminal pyroglutamyl group from a polypeptide, the second amino acid generally not being Pro.. In terms of biological role, removes 5-oxoproline from various penultimate amino acid residues except L-proline. The chain is Pyrrolidone-carboxylate peptidase from Yersinia pseudotuberculosis serotype O:1b (strain IP 31758).